A 136-amino-acid chain; its full sequence is Large-conductance mechanosensitive channel (136 aa).

2 helical membrane-spanning segments follow: residues 10-30 (FAMR…AAFG) and 76-96 (GAFI…FIAI).

Belongs to the MscL family. In terms of assembly, homopentamer.

Its subcellular location is the cell inner membrane. Functionally, channel that opens in response to stretch forces in the membrane lipid bilayer. May participate in the regulation of osmotic pressure changes within the cell. The sequence is that of Large-conductance mechanosensitive channel from Pectobacterium atrosepticum (strain SCRI 1043 / ATCC BAA-672) (Erwinia carotovora subsp. atroseptica).